A 1087-amino-acid polypeptide reads, in one-letter code: Exportin-7-B (1087 aa).

The 67-residue stretch at 30 to 96 folds into the Importin N-terminal domain; the sequence is AEKALVEFTN…RNYVLTYLAT (67 aa).

The protein belongs to the exportin family.

The protein localises to the cytoplasm. Its subcellular location is the nucleus. Mediates the nuclear export of proteins (cargos) with broad substrate specificity. In Xenopus laevis (African clawed frog), this protein is Exportin-7-B (xpo7-b).